Consider the following 757-residue polypeptide: Polyribonucleotide nucleotidyltransferase (757 aa).

Mg(2+)-binding residues include D525 and D531. One can recognise a KH domain in the interval 591-650 (PRVISVNIPVDKIGELIGPKGKTINAIQDETGADISIEEDGTVYIGAVDGPSADAARAQV). Residues 662–734 (GESFLGTVVK…DRGKLSLAPV (73 aa)) enclose the S1 motif domain. The segment at 737 to 757 (ETADQEGRDAASHGSEAPAEG) is disordered.

This sequence belongs to the polyribonucleotide nucleotidyltransferase family. Requires Mg(2+) as cofactor.

It is found in the cytoplasm. It carries out the reaction RNA(n+1) + phosphate = RNA(n) + a ribonucleoside 5'-diphosphate. Its function is as follows. Involved in mRNA degradation. Catalyzes the phosphorolysis of single-stranded polyribonucleotides processively in the 3'- to 5'-direction. This is Polyribonucleotide nucleotidyltransferase from Clavibacter michiganensis subsp. michiganensis (strain NCPPB 382).